We begin with the raw amino-acid sequence, 91 residues long: MRKIIIDGRDFENIEVLHDDLKDKLDFPDYYGRNLDALWDCLTGWVDLPLTLVLKNFEFSNTFLGSYADDVLEVIQEAQEELKDEFKIIIE.

The protein belongs to the barstar family.

The protein localises to the cytoplasm. This Bacillus subtilis (strain 168) protein is Putative ribonuclease inhibitor YrdF (yrdF).